A 209-amino-acid chain; its full sequence is Probable nicotinate-nucleotide adenylyltransferase (209 aa).

Belongs to the NadD family.

It catalyses the reaction nicotinate beta-D-ribonucleotide + ATP + H(+) = deamido-NAD(+) + diphosphate. It participates in cofactor biosynthesis; NAD(+) biosynthesis; deamido-NAD(+) from nicotinate D-ribonucleotide: step 1/1. Its function is as follows. Catalyzes the reversible adenylation of nicotinate mononucleotide (NaMN) to nicotinic acid adenine dinucleotide (NaAD). The chain is Probable nicotinate-nucleotide adenylyltransferase from Shewanella woodyi (strain ATCC 51908 / MS32).